A 268-amino-acid chain; its full sequence is NADPH-dependent 7-cyano-7-deazaguanine reductase (268 aa).

79 to 81 (VES) is a substrate binding site. 81–82 (SK) provides a ligand contact to NADPH. Cys176 serves as the catalytic Thioimide intermediate. Residue Asp183 is the Proton donor of the active site. 215 to 216 (HE) is a binding site for substrate. 244–245 (RG) is a binding site for NADPH.

The protein belongs to the GTP cyclohydrolase I family. QueF type 2 subfamily. In terms of assembly, homodimer.

Its subcellular location is the cytoplasm. It carries out the reaction 7-aminomethyl-7-carbaguanine + 2 NADP(+) = 7-cyano-7-deazaguanine + 2 NADPH + 3 H(+). The protein operates within tRNA modification; tRNA-queuosine biosynthesis. Catalyzes the NADPH-dependent reduction of 7-cyano-7-deazaguanine (preQ0) to 7-aminomethyl-7-deazaguanine (preQ1). The sequence is that of NADPH-dependent 7-cyano-7-deazaguanine reductase from Saccharophagus degradans (strain 2-40 / ATCC 43961 / DSM 17024).